Reading from the N-terminus, the 521-residue chain is Protein disulfide-isomerase A5 (521 aa).

Positions 1 to 25 (MARVVPAWLLLPLAVWVVLPTWLSS) are cleaved as a signal peptide. Thioredoxin domains follow at residues 136-263 (FLKD…NPQP), 274-386 (ADEG…NPES), and 387-508 (PPPP…TLRE). 3 cysteine pairs are disulfide-bonded: cysteine 184/cysteine 187, cysteine 307/cysteine 310, and cysteine 428/cysteine 431. Residues 518 to 521 (KEEL) carry the Prevents secretion from ER motif.

This sequence belongs to the protein disulfide isomerase family.

It is found in the endoplasmic reticulum lumen. The catalysed reaction is Catalyzes the rearrangement of -S-S- bonds in proteins.. This Bos taurus (Bovine) protein is Protein disulfide-isomerase A5 (PDIA5).